A 347-amino-acid polypeptide reads, in one-letter code: Ketol-acid reductoisomerase (NADP(+)) (347 aa).

The KARI N-terminal Rossmann domain occupies 3–182; it reads TKMFYDKDID…GSGRAGILET (180 aa). NADP(+)-binding positions include 26-29, R49, S53, and 83-86; these read YGAQ and DELQ. The active site involves H108. G134 serves as a coordination point for NADP(+). Residues 183–328 form the KARI C-terminal knotted domain; sequence TFEEETTEDL…KKVRAMMPWI (146 aa). D191, E195, E227, and E231 together coordinate Mg(2+). S252 is a substrate binding site.

The protein belongs to the ketol-acid reductoisomerase family. The cofactor is Mg(2+).

It carries out the reaction (2R)-2,3-dihydroxy-3-methylbutanoate + NADP(+) = (2S)-2-acetolactate + NADPH + H(+). It catalyses the reaction (2R,3R)-2,3-dihydroxy-3-methylpentanoate + NADP(+) = (S)-2-ethyl-2-hydroxy-3-oxobutanoate + NADPH + H(+). The protein operates within amino-acid biosynthesis; L-isoleucine biosynthesis; L-isoleucine from 2-oxobutanoate: step 2/4. It participates in amino-acid biosynthesis; L-valine biosynthesis; L-valine from pyruvate: step 2/4. Its function is as follows. Involved in the biosynthesis of branched-chain amino acids (BCAA). Catalyzes an alkyl-migration followed by a ketol-acid reduction of (S)-2-acetolactate (S2AL) to yield (R)-2,3-dihydroxy-isovalerate. In the isomerase reaction, S2AL is rearranged via a Mg-dependent methyl migration to produce 3-hydroxy-3-methyl-2-ketobutyrate (HMKB). In the reductase reaction, this 2-ketoacid undergoes a metal-dependent reduction by NADPH to yield (R)-2,3-dihydroxy-isovalerate. This Leuconostoc mesenteroides subsp. mesenteroides (strain ATCC 8293 / DSM 20343 / BCRC 11652 / CCM 1803 / JCM 6124 / NCDO 523 / NBRC 100496 / NCIMB 8023 / NCTC 12954 / NRRL B-1118 / 37Y) protein is Ketol-acid reductoisomerase (NADP(+)).